Consider the following 623-residue polypeptide: Putative ABC transporter ATP-binding protein MG014 homolog (623 aa).

The region spanning 16-325 (LILAPLFTFA…YIVLGLILTS (310 aa)) is the ABC transmembrane type-1 domain. 6 helical membrane passes run 27–47 (IIID…VFSI), 86–106 (VILL…CASI), 157–177 (FLRL…FAIA), 180–200 (SDMS…IGIL), 266–286 (NIPF…LLVF), and 307–327 (IFAF…TSLT). The ABC transporter domain maps to 365–611 (LEFKNVAFGL…CDIYVKMKQA (247 aa)). Residue 400 to 407 (GPTGSGKS) coordinates ATP.

This sequence belongs to the ABC transporter superfamily.

The protein localises to the cell membrane. This chain is Putative ABC transporter ATP-binding protein MG014 homolog, found in Mycoplasma pneumoniae (strain ATCC 29342 / M129 / Subtype 1) (Mycoplasmoides pneumoniae).